The primary structure comprises 157 residues: SsrA-binding protein (157 aa).

It belongs to the SmpB family.

The protein localises to the cytoplasm. Required for rescue of stalled ribosomes mediated by trans-translation. Binds to transfer-messenger RNA (tmRNA), required for stable association of tmRNA with ribosomes. tmRNA and SmpB together mimic tRNA shape, replacing the anticodon stem-loop with SmpB. tmRNA is encoded by the ssrA gene; the 2 termini fold to resemble tRNA(Ala) and it encodes a 'tag peptide', a short internal open reading frame. During trans-translation Ala-aminoacylated tmRNA acts like a tRNA, entering the A-site of stalled ribosomes, displacing the stalled mRNA. The ribosome then switches to translate the ORF on the tmRNA; the nascent peptide is terminated with the 'tag peptide' encoded by the tmRNA and targeted for degradation. The ribosome is freed to recommence translation, which seems to be the essential function of trans-translation. In Limosilactobacillus fermentum (strain NBRC 3956 / LMG 18251) (Lactobacillus fermentum), this protein is SsrA-binding protein.